Reading from the N-terminus, the 147-residue chain is Cyanate hydratase (147 aa).

Catalysis depends on residues arginine 88, glutamate 91, and serine 114.

It belongs to the cyanase family.

The catalysed reaction is cyanate + hydrogencarbonate + 3 H(+) = NH4(+) + 2 CO2. Functionally, catalyzes the reaction of cyanate with bicarbonate to produce ammonia and carbon dioxide. This chain is Cyanate hydratase, found in Prochlorococcus marinus subsp. pastoris (strain CCMP1986 / NIES-2087 / MED4).